Consider the following 649-residue polypeptide: UvrABC system protein B (649 aa).

The region spanning 25–178 (EHYKDGIKEQ…EDILKELVKM (154 aa)) is the Helicase ATP-binding domain. Residue 38 to 45 (GVTGSGKT) coordinates ATP. The short motif at 91-114 (YYDYYQPEAYVAQTDTFIDKESAI) is the Beta-hairpin element. The Helicase C-terminal domain maps to 428–594 (QVDDLLGEIR…SVVRKLKDKK (167 aa)). The UVR domain maps to 614–649 (DEIIKELEKEMKQAAKDLNFEKAAKLRDRIMELKEE).

Belongs to the UvrB family. In terms of assembly, forms a heterotetramer with UvrA during the search for lesions. Interacts with UvrC in an incision complex.

It localises to the cytoplasm. The UvrABC repair system catalyzes the recognition and processing of DNA lesions. A damage recognition complex composed of 2 UvrA and 2 UvrB subunits scans DNA for abnormalities. Upon binding of the UvrA(2)B(2) complex to a putative damaged site, the DNA wraps around one UvrB monomer. DNA wrap is dependent on ATP binding by UvrB and probably causes local melting of the DNA helix, facilitating insertion of UvrB beta-hairpin between the DNA strands. Then UvrB probes one DNA strand for the presence of a lesion. If a lesion is found the UvrA subunits dissociate and the UvrB-DNA preincision complex is formed. This complex is subsequently bound by UvrC and the second UvrB is released. If no lesion is found, the DNA wraps around the other UvrB subunit that will check the other stand for damage. The chain is UvrABC system protein B from Methanosphaera stadtmanae (strain ATCC 43021 / DSM 3091 / JCM 11832 / MCB-3).